The primary structure comprises 195 residues: Large ribosomal subunit protein mL58 (195 aa).

The transit peptide at 1–18 (MIGRGVCCRSFHTAGSAW) directs the protein to the mitochondrion.

This sequence belongs to the mitochondrion-specific ribosomal protein mL58 family. As to quaternary structure, component of the mitochondrial large ribosomal subunit (mt-LSU). Mature yeast 74S mitochondrial ribosomes consist of a small (37S) and a large (54S) subunit. The 37S small subunit contains a 15S ribosomal RNA (15S mt-rRNA) and 34 different proteins. The 54S large subunit contains a 21S rRNA (21S mt-rRNA) and 46 different proteins.

It is found in the mitochondrion. Its function is as follows. Component of the mitochondrial ribosome (mitoribosome), a dedicated translation machinery responsible for the synthesis of mitochondrial genome-encoded proteins, including at least some of the essential transmembrane subunits of the mitochondrial respiratory chain. The mitoribosomes are attached to the mitochondrial inner membrane and translation products are cotranslationally integrated into the membrane. This is Large ribosomal subunit protein mL58 (MRPL20) from Saccharomyces cerevisiae (strain ATCC 204508 / S288c) (Baker's yeast).